We begin with the raw amino-acid sequence, 550 residues long: CTP synthase (550 aa).

The amidoligase domain stretch occupies residues 1–270; the sequence is MTKFVFVTGG…DRLICEELRL (270 aa). S13 contacts CTP. S13 lines the UTP pocket. ATP contacts are provided by residues 14–19 and D71; that span reads SLGKGI. Mg(2+) contacts are provided by D71 and E144. Residues 151 to 153, 191 to 196, and K227 each bind CTP; these read DIE and KTKPTQ. Residues 191–196 and K227 each bind UTP; that span reads KTKPTQ. Residues 295-547 form the Glutamine amidotransferase type-1 domain; that stretch reads TIGMVGKYVD…VEAALASQQR (253 aa). G356 is a binding site for L-glutamine. C383 (nucleophile; for glutamine hydrolysis) is an active-site residue. L-glutamine contacts are provided by residues 384–387, E407, and R473; that span reads LGMQ. Active-site residues include H520 and E522.

This sequence belongs to the CTP synthase family. As to quaternary structure, homotetramer.

The enzyme catalyses UTP + L-glutamine + ATP + H2O = CTP + L-glutamate + ADP + phosphate + 2 H(+). It catalyses the reaction L-glutamine + H2O = L-glutamate + NH4(+). It carries out the reaction UTP + NH4(+) + ATP = CTP + ADP + phosphate + 2 H(+). It functions in the pathway pyrimidine metabolism; CTP biosynthesis via de novo pathway; CTP from UDP: step 2/2. Its activity is regulated as follows. Allosterically activated by GTP, when glutamine is the substrate; GTP has no effect on the reaction when ammonia is the substrate. The allosteric effector GTP functions by stabilizing the protein conformation that binds the tetrahedral intermediate(s) formed during glutamine hydrolysis. Inhibited by the product CTP, via allosteric rather than competitive inhibition. Functionally, catalyzes the ATP-dependent amination of UTP to CTP with either L-glutamine or ammonia as the source of nitrogen. Regulates intracellular CTP levels through interactions with the four ribonucleotide triphosphates. The protein is CTP synthase of Cupriavidus taiwanensis (strain DSM 17343 / BCRC 17206 / CCUG 44338 / CIP 107171 / LMG 19424 / R1) (Ralstonia taiwanensis (strain LMG 19424)).